The chain runs to 358 residues: S-adenosylmethionine:tRNA ribosyltransferase-isomerase (358 aa).

This sequence belongs to the QueA family. Monomer.

It localises to the cytoplasm. It carries out the reaction 7-aminomethyl-7-carbaguanosine(34) in tRNA + S-adenosyl-L-methionine = epoxyqueuosine(34) in tRNA + adenine + L-methionine + 2 H(+). The protein operates within tRNA modification; tRNA-queuosine biosynthesis. Its function is as follows. Transfers and isomerizes the ribose moiety from AdoMet to the 7-aminomethyl group of 7-deazaguanine (preQ1-tRNA) to give epoxyqueuosine (oQ-tRNA). This chain is S-adenosylmethionine:tRNA ribosyltransferase-isomerase, found in Desulfotalea psychrophila (strain LSv54 / DSM 12343).